Consider the following 187-residue polypeptide: Superoxide dismutase [Cu-Zn] (187 aa).

The N-terminal stretch at 1-21 is a signal peptide; the sequence is MSLLPTGTLILLVLFILVLIT. Positions 76, 78, and 93 each coordinate Cu cation. C87 and C176 are disulfide-bonded. Zn(2+)-binding residues include H93, H101, H110, and D113. H150 is a binding site for Cu cation.

Belongs to the Cu-Zn superoxide dismutase family. The cofactor is Cu cation. It depends on Zn(2+) as a cofactor.

The catalysed reaction is 2 superoxide + 2 H(+) = H2O2 + O2. Destroys radicals which are normally produced within the cells and which are toxic to biological systems. This chain is Superoxide dismutase [Cu-Zn], found in Chlorella (PBCV-1).